The following is a 569-amino-acid chain: Ribosome-inactivating protein SNAI' (569 aa).

The signal sequence occupies residues 1–28; sequence MKVVATILYLVVLAICGLGIHGAHPTHS. Residue Asn40 is glycosylated (N-linked (GlcNAc...) asparagine). Glu201 is an active-site residue. 3 disulfides stabilise this stretch: Cys286–Cys311, Cys328–Cys347, and Cys369–Cys381. Ricin B-type lectin domains are found at residues 315-435 and 437-565; these read EEVT…WIVG and VEPL…WIAS. The 1-alpha repeat unit spans residues 325 to 365; the sequence is DGFCAEVKNGDEKDGTPVQLSSCGEQSNQQWTFSTDGTIQS. A 1-beta repeat occupies 366–401; it reads LGKCLTTSSSVMIYNCKVVPPESTKWVVSIDGTITN. One copy of the 1-gamma repeat lies at 404–436; that stretch reads SGLVLTAPKAAEGTLVSLEKNVHAARQGWIVGN. One copy of the 2-alpha repeat lies at 448-488; that stretch reads EQMCLETNPGNNDVSLGDCSVKSASKVDQKWALYGDGTIRV. Cystine bridges form between Cys451/Cys466 and Cys495/Cys512. The 2-beta repeat unit spans residues 492–530; sequence RSLCVTSEGKSSNEPIIILKCLGWANQRWVFNTDGTISN. A 2-gamma repeat occupies 533–566; the sequence is SKLVMHVDQNDVPLRKIILSHPSGTSNQQWIAST.

It in the N-terminal section; belongs to the ribosome-inactivating protein family. Type 2 RIP subfamily. As to quaternary structure, disulfide-linked dimer of A and B chains.

The catalysed reaction is Endohydrolysis of the N-glycosidic bond at one specific adenosine on the 28S rRNA.. Its function is as follows. The A chain is responsible for inhibiting protein synthesis through the catalytic inactivation of 60S ribosomal subunits by removing adenine from position 4,324 of 28S rRNA. The B chain binds to cell receptors and probably facilitates the entry into the cell of the A chain; B chains are also responsible for cell agglutination (lectin activity). Agglutination is inhibited by Neu5Ac(alpha2,6)lactose, and N-linked glycoproteins such as fetuin and orosomucoid. The chain is Ribosome-inactivating protein SNAI' from Sambucus nigra (European elder).